We begin with the raw amino-acid sequence, 232 residues long: Small ribosomal subunit protein uS2 (232 aa).

This sequence belongs to the universal ribosomal protein uS2 family.

The polypeptide is Small ribosomal subunit protein uS2 (Natranaerobius thermophilus (strain ATCC BAA-1301 / DSM 18059 / JW/NM-WN-LF)).